The sequence spans 396 residues: L-lactate dehydrogenase (396 aa).

In terms of domain architecture, FMN hydroxy acid dehydrogenase spans 1–380 (MIISAASDYR…TQDSLVQGLG (380 aa)). Residue tyrosine 24 coordinates substrate. Residues serine 106 and glutamine 127 each coordinate FMN. A substrate-binding site is contributed by tyrosine 129. Threonine 155 serves as a coordination point for FMN. A substrate-binding site is contributed by arginine 164. Lysine 251 is an FMN binding site. Histidine 275 serves as the catalytic Proton acceptor. Arginine 278 contributes to the substrate binding site. FMN is bound at residue 306–330 (DSGIRNGLDVVRMIALGADTVLLGR).

This sequence belongs to the FMN-dependent alpha-hydroxy acid dehydrogenase family. It depends on FMN as a cofactor.

The protein resides in the cell inner membrane. The catalysed reaction is (S)-lactate + A = pyruvate + AH2. In terms of biological role, catalyzes the conversion of L-lactate to pyruvate. Is coupled to the respiratory chain. This is L-lactate dehydrogenase from Shigella boydii serotype 18 (strain CDC 3083-94 / BS512).